Here is a 447-residue protein sequence, read N- to C-terminus: Glycylpeptide N-tetradecanoyltransferase (447 aa).

Residues 38–41, 171–173, and 179–183 each bind tetradecanoyl-CoA; these read YKFW, LCV, and SKRLA. Leucine 447 functions as the Proton acceptor; via carboxylate in the catalytic mechanism.

Belongs to the NMT family. As to quaternary structure, monomer.

It localises to the cytoplasm. It catalyses the reaction N-terminal glycyl-[protein] + tetradecanoyl-CoA = N-tetradecanoylglycyl-[protein] + CoA + H(+). Functionally, adds a myristoyl group to the N-terminal glycine residue of certain cellular proteins. The polypeptide is Glycylpeptide N-tetradecanoyltransferase (NMT1) (Kluyveromyces lactis (strain ATCC 8585 / CBS 2359 / DSM 70799 / NBRC 1267 / NRRL Y-1140 / WM37) (Yeast)).